An 819-amino-acid chain; its full sequence is Leucine--tRNA ligase (819 aa).

A 'HIGH' region motif is present at residues 42 to 53 (PYPSGAKLHIGH). Residues 578 to 582 (RMSKS) carry the 'KMSKS' region motif. Lys581 is a binding site for ATP.

The protein belongs to the class-I aminoacyl-tRNA synthetase family.

The protein localises to the cytoplasm. It catalyses the reaction tRNA(Leu) + L-leucine + ATP = L-leucyl-tRNA(Leu) + AMP + diphosphate. In Caldanaerobacter subterraneus subsp. tengcongensis (strain DSM 15242 / JCM 11007 / NBRC 100824 / MB4) (Thermoanaerobacter tengcongensis), this protein is Leucine--tRNA ligase.